A 639-amino-acid chain; its full sequence is Phosphatidylinositol 3,4,5-trisphosphate 3-phosphatase cnrN (639 aa).

In terms of domain architecture, Phosphatase tensin-type spans 20-190; that stretch reads FKSKEMDLDL…NYFKEIVSGS (171 aa). Cys129 functions as the Phosphocysteine intermediate in the catalytic mechanism. A C2 tensin-type domain is found at 195–350; sequence EFVLTFRSIE…LQMECRFQNN (156 aa). Disordered stretches follow at residues 243–265, 395–429, 451–498, 519–567, and 598–628; these read INND…NNNN, NNIL…HSTP, SSSG…SCSS, NNNN…RKRK, and FTKK…DPSE. Low complexity-rich tracts occupy residues 244 to 265, 395 to 424, 458 to 486, and 519 to 554; these read NNDN…NNNN, NNIL…LPSS, NSSR…SRSS, and NNNN…SNSN. Polar residues predominate over residues 598–608; the sequence is FTKKINPNNNE. Residues 619 to 628 show a composition bias toward basic and acidic residues; sequence LKKETNDPSE.

Requires Mg(2+) as cofactor.

The enzyme catalyses a 1,2-diacyl-sn-glycero-3-phospho-(1D-myo-inositol-3,4,5-trisphosphate) + H2O = a 1,2-diacyl-sn-glycero-3-phospho-(1D-myo-inositol-4,5-bisphosphate) + phosphate. Protein phosphatase that negatively regulates PI3K-dependent pathways. Regulates cAMP signal transduction to control territory size. During development, a lawn of Dictyostelium cells breaks up into territories where cells aggregate in dendritic streams to form groups of 20'000 cells. This Dictyostelium discoideum (Social amoeba) protein is Phosphatidylinositol 3,4,5-trisphosphate 3-phosphatase cnrN (cnrN).